The following is an 84-amino-acid chain: ATPase-stabilizing factor 15 kDa protein (84 aa).

Over residues 1 to 18 (MTRTNKWTEREGKADPKY) the composition is skewed to basic and acidic residues. The tract at residues 1 to 84 (MTRTNKWTER…EQKFENVQKE (84 aa)) is disordered. Residues Ser28 and Ser69 each carry the phosphoserine modification. The segment covering 74–84 (HEQKFENVQKE) has biased composition (basic and acidic residues).

It belongs to the STF2 family.

It localises to the mitochondrion. Its subcellular location is the cytoplasm. Its function is as follows. Found to stabilize, together with STF1, a complex of intrinsic ATPase inhibitor INH1 and proton-translocating ATPase (F(1)F(0)-ATPase) in mitochondrial membranes. Binds to the F0 part and may function to hold the ATPase inhibitor or STF1 on the F1 subunit. Also acts as a hydrophilins that enhances dry stress tolerance. Cell viability after desiccation and rehydration is due to the antioxidant capacity of the protein, which reduces the number of apoptotic cells during stress conditions by minimising the accumulation of reactive oxygen species (ROS) in the cells. This chain is ATPase-stabilizing factor 15 kDa protein (STF2), found in Saccharomyces cerevisiae (strain ATCC 204508 / S288c) (Baker's yeast).